A 205-amino-acid polypeptide reads, in one-letter code: Probable molybdenum cofactor guanylyltransferase (205 aa).

Residues 10–12, Lys-22, Asp-69, and Asp-100 each bind GTP; that span reads LAG. Asp-100 is a Mg(2+) binding site.

It belongs to the MobA family. The cofactor is Mg(2+).

Its subcellular location is the cytoplasm. The catalysed reaction is Mo-molybdopterin + GTP + H(+) = Mo-molybdopterin guanine dinucleotide + diphosphate. Transfers a GMP moiety from GTP to Mo-molybdopterin (Mo-MPT) cofactor (Moco or molybdenum cofactor) to form Mo-molybdopterin guanine dinucleotide (Mo-MGD) cofactor. The protein is Probable molybdenum cofactor guanylyltransferase of Natranaerobius thermophilus (strain ATCC BAA-1301 / DSM 18059 / JW/NM-WN-LF).